A 380-amino-acid chain; its full sequence is Kappa-type opioid receptor (380 aa).

The Extracellular segment spans residues 1-57; it reads MDSPIQIFRGEPGPTCAPSACLPPNSSAWFPGWAEPDSNGSAGSEDAQLEPAHISPA. Asn25 and Asn39 each carry an N-linked (GlcNAc...) asparagine glycan. The chain crosses the membrane as a helical span at residues 58 to 85; sequence IPVIITAVYSVVFVVGLVGNSLVMFVII. At 86-95 the chain is on the cytoplasmic side; that stretch reads RYTKMKTATN. A helical membrane pass occupies residues 96-119; that stretch reads IYIFNLALADALVTTTMPFQSTVY. The Extracellular portion of the chain corresponds to 120 to 132; that stretch reads LMNSWPFGDVLCK. An intrachain disulfide couples Cys131 to Cys210. The chain crosses the membrane as a helical span at residues 133–154; sequence IVISIDYYNMFTSIFTLTMMSV. At 155–173 the chain is on the cytoplasmic side; the sequence is DRYIAVCHPVKALDFRTPL. A helical membrane pass occupies residues 174 to 196; it reads KAKIINICIWLLSSSVGISAIVL. Over 197 to 222 the chain is Extracellular; the sequence is GGTKVREDVDVIECSLQFPDDDYSWW. The helical transmembrane segment at 223–247 threads the bilayer; the sequence is DLFMKICVFIFAFVIPVLIIIVCYT. At 248 to 274 the chain is on the cytoplasmic side; that stretch reads LMILRLKSVRLLSGSREKDRNLRRITR. A helical transmembrane segment spans residues 275 to 296; that stretch reads LVLVVVAVFVVCWTPIHIFILV. Residues 297–311 lie on the Extracellular side of the membrane; that stretch reads EALGSTSHSTAALSS. Residues 312 to 333 traverse the membrane as a helical segment; it reads YYFCIALGYTNSSLNPILYAFL. The Cytoplasmic segment spans residues 334–380; that stretch reads DENFKRCFRDFCFPLKMRMERQSTSRVRNTVQDPAYLRDIDGMNKPV. A lipid anchor (S-palmitoyl cysteine) is attached at Cys345.

It belongs to the G-protein coupled receptor 1 family. In terms of assembly, interacts with NHERF1. Interacts with GABARAPL1. Detected in brain and placenta.

It is found in the cell membrane. In terms of biological role, G-protein coupled opioid receptor that functions as a receptor for endogenous alpha-neoendorphins and dynorphins, but has low affinity for beta-endorphins. Also functions as a receptor for various synthetic opioids and for the psychoactive diterpene salvinorin A. Ligand binding causes a conformation change that triggers signaling via guanine nucleotide-binding proteins (G proteins) and modulates the activity of down-stream effectors, such as adenylate cyclase. Signaling leads to the inhibition of adenylate cyclase activity. Inhibits neurotransmitter release by reducing calcium ion currents and increasing potassium ion conductance. Plays a role in the perception of pain. Plays a role in mediating reduced physical activity upon treatment with synthetic opioids. Plays a role in the regulation of salivation in response to synthetic opioids. May play a role in arousal and regulation of autonomic and neuroendocrine functions. The protein is Kappa-type opioid receptor (OPRK1) of Homo sapiens (Human).